The following is a 152-amino-acid chain: Large ribosomal subunit protein uL15 (152 aa).

The disordered stretch occupies residues 1–56 (MELNTLKPAKNSVKQNTRYGRGQGSGKGGTSTRGHKGAKSRSGYKSKPGFEGGQLP). Residues 21–31 (RGQGSGKGGTS) show a composition bias toward gly residues. Positions 33-44 (RGHKGAKSRSGY) are enriched in basic residues.

Belongs to the universal ribosomal protein uL15 family. In terms of assembly, part of the 50S ribosomal subunit.

Binds to the 23S rRNA. In Amoebophilus asiaticus (strain 5a2), this protein is Large ribosomal subunit protein uL15.